Here is a 60-residue protein sequence, read N- to C-terminus: Large ribosomal subunit protein bL32 (60 aa).

Residues 1-21 are disordered; the sequence is MAVPARHTSKAKKNKRRTHYK. Basic residues predominate over residues 7–20; that stretch reads HTSKAKKNKRRTHY.

The protein belongs to the bacterial ribosomal protein bL32 family.

The polypeptide is Large ribosomal subunit protein bL32 (Streptococcus equi subsp. zooepidemicus (strain H70)).